The sequence spans 276 residues: Putative pyridoxine kinase (276 aa).

Residue Asn-139 participates in ATP binding. Position 142 (Glu-142) interacts with Mg(2+). Residues 176–180, Asp-188, Gly-213, and Lys-238 each bind ATP; that span reads KGGKA.

It belongs to the ThiD family.

The catalysed reaction is pyridoxal + ATP = pyridoxal 5'-phosphate + ADP + H(+). In terms of biological role, phosphorylates B6 vitamers; functions in a salvage pathway. Uses pyridoxal, pyridoxine, and pyridoxamine as substrates. The polypeptide is Putative pyridoxine kinase (pdxK) (Staphylococcus epidermidis (strain ATCC 35984 / DSM 28319 / BCRC 17069 / CCUG 31568 / BM 3577 / RP62A)).